The sequence spans 122 residues: MSLTNDQIVEALSAKTVLEIAELVKTLEEKWGVSAAAPVAAAAAGPAAAVEEKTAFDVILVDAGANKINVIKEVRGLTGLGLAEAKALVEAGNKAVKEGATKEDAEKIKKALEAAGAKVTVK.

This sequence belongs to the bacterial ribosomal protein bL12 family. In terms of assembly, homodimer. Part of the ribosomal stalk of the 50S ribosomal subunit. Forms a multimeric L10(L12)X complex, where L10 forms an elongated spine to which 2 to 4 L12 dimers bind in a sequential fashion. Binds GTP-bound translation factors.

In terms of biological role, forms part of the ribosomal stalk which helps the ribosome interact with GTP-bound translation factors. Is thus essential for accurate translation. In Bdellovibrio bacteriovorus (strain ATCC 15356 / DSM 50701 / NCIMB 9529 / HD100), this protein is Large ribosomal subunit protein bL12.